Reading from the N-terminus, the 464-residue chain is Argininosuccinate lyase (464 aa).

Belongs to the lyase 1 family. Argininosuccinate lyase subfamily.

The protein resides in the cytoplasm. The enzyme catalyses 2-(N(omega)-L-arginino)succinate = fumarate + L-arginine. The protein operates within amino-acid biosynthesis; L-arginine biosynthesis; L-arginine from L-ornithine and carbamoyl phosphate: step 3/3. The sequence is that of Argininosuccinate lyase from Sulfurovum sp. (strain NBC37-1).